Reading from the N-terminus, the 689-residue chain is PR domain zinc finger protein 8 (689 aa).

An SET domain is found at 16-131 (KAVQQCLTDI…KDEELLVWYG (116 aa)). Residue tyrosine 130 participates in S-adenosyl-L-methionine binding. The C2H2-type 1 zinc finger occupies 155-183 (YTCLECSQRFQFEFPYVAHLRFRCPKRLH). Disordered regions lie at residues 185–333 (ADIS…VGGR) and 397–506 (SLQE…QPAR). Residues 193-210 (QGGGVGTKDHGGGGGGGK) show a composition bias toward gly residues. Low complexity-rich tracts occupy residues 241–258 (PESS…AKPS) and 273–286 (GGSS…LSSG). The span at 322 to 333 (EGGGGAGLVGGR) shows a compositional bias: gly residues. Residues 423–433 (STPAAASPVGA) are compositionally biased toward low complexity. The segment covering 472 to 491 (TSGGGGTGAGAAGGAGGGQG) has biased composition (gly residues). 2 consecutive C2H2-type zinc fingers follow at residues 625-648 (NWCA…RSHH) and 666-688 (LKCP…MTSH).

This sequence belongs to the class V-like SAM-binding methyltransferase superfamily. Interacts with EPM2A and NHLRC1. This interaction sequesters EPM2A and NHLRC1 to the nucleus. Interacts with BHLHE22. As to expression, expressed in brain, heart, skeletal muscle, testes, prostate.

The protein resides in the nucleus. Functionally, probable histone methyltransferase, preferentially acting on 'Lys-9' of histone H3. Involved in the control of steroidogenesis through transcriptional repression of steroidogenesis marker genes such as CYP17A1 and LHCGR. Forms with BHLHE22 a transcriptional repressor complex controlling genes involved in neural development and neuronal differentiation. In the retina, it is required for rod bipolar and type 2 OFF-cone bipolar cell survival. This Homo sapiens (Human) protein is PR domain zinc finger protein 8 (PRDM8).